We begin with the raw amino-acid sequence, 63 residues long: Large ribosomal subunit protein uL29 (63 aa).

This sequence belongs to the universal ribosomal protein uL29 family.

In Marinomonas sp. (strain MWYL1), this protein is Large ribosomal subunit protein uL29.